The primary structure comprises 397 residues: uncharacterized protein (397 aa).

[4Fe-4S] cluster is bound by residues Cys-8, Cys-14, Cys-17, and Cys-95. Positions 229, 258, 279, and 325 each coordinate S-adenosyl-L-methionine. Residue Cys-352 is the Nucleophile of the active site.

This sequence belongs to the class I-like SAM-binding methyltransferase superfamily. RNA M5U methyltransferase family.

This is an uncharacterized protein from Chlamydia muridarum (strain MoPn / Nigg).